A 495-amino-acid chain; its full sequence is Adenosylhomocysteinase (495 aa).

Residues T71, D156, and E218 each coordinate substrate. NAD(+) is bound at residue 219-221 (TTT). Positions 248 and 252 each coordinate substrate. NAD(+) is bound by residues N253, 282-287 (GYGDVG), E305, N340, 361-363 (IGH), and N409.

It belongs to the adenosylhomocysteinase family. Requires NAD(+) as cofactor.

The protein localises to the cytoplasm. It carries out the reaction S-adenosyl-L-homocysteine + H2O = L-homocysteine + adenosine. It functions in the pathway amino-acid biosynthesis; L-homocysteine biosynthesis; L-homocysteine from S-adenosyl-L-homocysteine: step 1/1. Functionally, may play a key role in the regulation of the intracellular concentration of adenosylhomocysteine. The polypeptide is Adenosylhomocysteinase (Mycobacterium tuberculosis (strain ATCC 25177 / H37Ra)).